Here is a 61-residue protein sequence, read N- to C-terminus: Small ribosomal subunit protein uS14 (61 aa).

Cys24, Cys27, Cys40, and Cys43 together coordinate Zn(2+).

Belongs to the universal ribosomal protein uS14 family. Zinc-binding uS14 subfamily. As to quaternary structure, part of the 30S ribosomal subunit. Contacts proteins S3 and S10. The cofactor is Zn(2+).

Its function is as follows. Binds 16S rRNA, required for the assembly of 30S particles and may also be responsible for determining the conformation of the 16S rRNA at the A site. This Dictyoglomus thermophilum (strain ATCC 35947 / DSM 3960 / H-6-12) protein is Small ribosomal subunit protein uS14.